Here is a 487-residue protein sequence, read N- to C-terminus: N-succinylglutamate 5-semialdehyde dehydrogenase (487 aa).

An NAD(+)-binding site is contributed by G221–G226. Catalysis depends on residues E244 and C278.

The protein belongs to the aldehyde dehydrogenase family. AstD subfamily.

The enzyme catalyses N-succinyl-L-glutamate 5-semialdehyde + NAD(+) + H2O = N-succinyl-L-glutamate + NADH + 2 H(+). The protein operates within amino-acid degradation; L-arginine degradation via AST pathway; L-glutamate and succinate from L-arginine: step 4/5. Catalyzes the NAD-dependent reduction of succinylglutamate semialdehyde into succinylglutamate. This Burkholderia thailandensis (strain ATCC 700388 / DSM 13276 / CCUG 48851 / CIP 106301 / E264) protein is N-succinylglutamate 5-semialdehyde dehydrogenase.